Here is a 390-residue protein sequence, read N- to C-terminus: Cell division protein FtsZ (390 aa).

Residues 20–24, 106–108, glutamate 137, arginine 141, and aspartate 184 contribute to the GTP site; these read GGGNN and GTG.

The protein belongs to the FtsZ family. In terms of assembly, homodimer. Polymerizes to form a dynamic ring structure in a strictly GTP-dependent manner. Interacts directly with several other division proteins.

It localises to the cytoplasm. Functionally, essential cell division protein that forms a contractile ring structure (Z ring) at the future cell division site. The regulation of the ring assembly controls the timing and the location of cell division. One of the functions of the FtsZ ring is to recruit other cell division proteins to the septum to produce a new cell wall between the dividing cells. Binds GTP and shows GTPase activity. This is Cell division protein FtsZ from Mycoplasmopsis pulmonis (strain UAB CTIP) (Mycoplasma pulmonis).